The chain runs to 155 residues: Ribonuclease 8 (155 aa).

Positions 1 to 28 are cleaved as a signal peptide; it reads MAPARAGCCPLLLLLLLGLWVAEIPVSA. 3 disulfide bridges follow: cysteine 65–cysteine 119, cysteine 83–cysteine 134, and cysteine 90–cysteine 97. Substrate is bound by residues 66 to 70 and lysine 91; that span reads KDLNT. Residue histidine 150 is the Proton donor of the active site.

It belongs to the pancreatic ribonuclease family.

The protein resides in the secreted. In terms of biological role, has a low ribonuclease activity. The protein is Ribonuclease 8 (RNASE8) of Saguinus oedipus (Cotton-top tamarin).